The sequence spans 187 residues: dITP/XTP pyrophosphatase (187 aa).

7–12 is a binding site for substrate; the sequence is TGNKHK. Mg(2+) contacts are provided by E36 and D64. The Proton acceptor role is filled by D64. Residues A65, 140–143, K163, and 168–169 each bind substrate; these read FAFD and HR.

Belongs to the HAM1 NTPase family. Homodimer. It depends on Mg(2+) as a cofactor.

It carries out the reaction XTP + H2O = XMP + diphosphate + H(+). The enzyme catalyses dITP + H2O = dIMP + diphosphate + H(+). It catalyses the reaction ITP + H2O = IMP + diphosphate + H(+). Pyrophosphatase that catalyzes the hydrolysis of nucleoside triphosphates to their monophosphate derivatives, with a high preference for the non-canonical purine nucleotides XTP (xanthosine triphosphate), dITP (deoxyinosine triphosphate) and ITP. Seems to function as a house-cleaning enzyme that removes non-canonical purine nucleotides from the nucleotide pool, thus preventing their incorporation into DNA/RNA and avoiding chromosomal lesions. This is dITP/XTP pyrophosphatase from Methanothermobacter marburgensis (strain ATCC BAA-927 / DSM 2133 / JCM 14651 / NBRC 100331 / OCM 82 / Marburg) (Methanobacterium thermoautotrophicum).